The following is a 457-amino-acid chain: Metal tolerance protein C4 (457 aa).

Topologically, residues 1 to 115 are cytoplasmic; sequence MQSSHRILSR…IEINDQHSQR (115 aa). Residues 116–136 traverse the membrane as a helical segment; sequence AVTTALWCNFLVFSLKFGVWW. Residues 137–141 lie on the Vacuolar side of the membrane; sequence TSSSH. Residues 142–162 form a helical membrane-spanning segment; the sequence is VIMAEVVHSVADFANQALLAY. The Cytoplasmic segment spans residues 163–183; it reads GLSSSRRAPDALHPYGYSKER. Residues 184-204 traverse the membrane as a helical segment; sequence FVWSLISAVGIFCLGSGATIV. Topologically, residues 205 to 220 are vacuolar; that stretch reads NGVQNLWTSSPPPNME. The chain crosses the membrane as a helical span at residues 221-241; it reads LAAVVIGGSFLIEGASLLVAI. The Cytoplasmic segment spans residues 242-267; sequence QSVKKGAAQEGMTIRDYIWRGHDPTS. A helical transmembrane segment spans residues 268-288; it reads VAVMTEDGAAVAGLAIAAASL. Over 289 to 297 the chain is Vacuolar; sequence VAVRMTGNP. Residues 298–318 form a helical membrane-spanning segment; that stretch reads IYDPIGSIVVGNLLGMVAIFL. Topologically, residues 319–457 are cytoplasmic; sequence IQRNRHALIG…HNPTPTDPSL (139 aa).

It belongs to the cation diffusion facilitator (CDF) transporter (TC 2.A.4) family.

The protein resides in the vacuole membrane. Its function is as follows. Involved in sequestration of excess metal in the cytoplasm into vacuoles to maintain metal homeostasis. This chain is Metal tolerance protein C4 (MTPC4), found in Arabidopsis thaliana (Mouse-ear cress).